Here is a 407-residue protein sequence, read N- to C-terminus: Deacetylase Atu3266 (407 aa).

Residues histidine 75, histidine 77, lysine 173, histidine 206, histidine 229, and aspartate 289 each coordinate Zn(2+). Lysine 173 bears the N6-carboxylysine mark.

It belongs to the metallo-dependent hydrolases superfamily. Atu3266/EF_0837 deacetylase family. Homohexamer, dimer of trimers. Zn(2+) serves as cofactor.

Functionally, esterase that catalyzes the deacetylation of acetyl-(R)-mandelate (in vitro). Can also hydrolyze acetyl glycolate, but with lower efficiency. Has very low N-acetyl-D-amino acid deacetylase activity with N-acetyl-D-serine and N-acetyl-D-threonine (in vitro). Theoretical substrate docking studies suggest that other N-acetylated amino acids may optimally occupy the active site and may in fact be the physiological substrates. The protein is Deacetylase Atu3266 of Agrobacterium fabrum (strain C58 / ATCC 33970) (Agrobacterium tumefaciens (strain C58)).